Consider the following 521-residue polypeptide: U4/U6 small nuclear ribonucleoprotein Prp4 (521 aa).

Lysine 26 is modified (N6-acetyllysine). WD repeat units follow at residues aspartate 229–leucine 268, histidine 271–isoleucine 318, histidine 321–glutamine 360, histidine 363–leucine 402, histidine 405–isoleucine 444, histidine 447–leucine 487, and histidine 490–glutamate 521.

In terms of assembly, component of the precatalytic spliceosome (spliceosome B complex). Component of the U4/U6-U5 tri-snRNP complex, a building block of the precatalytic spliceosome (spliceosome B complex). The U4/U6-U5 tri-snRNP complex is composed of the U4, U6 and U5 snRNAs and at least PRPF3, PRPF4, PRPF6, PRPF8, PRPF31, SNRNP200, TXNL4A, SNRNP40, SNRPB, SNRPD1, SNRPD2, SNRPD3, SNRPE, SNRPF, SNRPG, DDX23, CD2BP2, PPIH, SNU13, EFTUD2, SART1 and USP39, plus LSM2, LSM3, LSM4, LSM5, LSM6, LSM7 and LSM8. Interacts directly with PRPF18, PPIH and PRPF3. Part of a heteromeric complex containing PPIH, PRPF3 and PRPF4 that is stable in the absence of RNA. Interacts with ERCC6.

The protein resides in the nucleus. It is found in the nucleus speckle. Plays a role in pre-mRNA splicing as component of the U4/U6-U5 tri-snRNP complex that is involved in spliceosome assembly, and as component of the precatalytic spliceosome (spliceosome B complex). This is U4/U6 small nuclear ribonucleoprotein Prp4 (PRPF4) from Bos taurus (Bovine).